Reading from the N-terminus, the 498-residue chain is UDP-N-acetylmuramate--L-alanine ligase (498 aa).

122 to 128 contributes to the ATP binding site; the sequence is GTHGKTS.

This sequence belongs to the MurCDEF family.

Its subcellular location is the cytoplasm. It catalyses the reaction UDP-N-acetyl-alpha-D-muramate + L-alanine + ATP = UDP-N-acetyl-alpha-D-muramoyl-L-alanine + ADP + phosphate + H(+). It functions in the pathway cell wall biogenesis; peptidoglycan biosynthesis. In terms of biological role, cell wall formation. This Corynebacterium jeikeium (strain K411) protein is UDP-N-acetylmuramate--L-alanine ligase.